Here is a 161-residue protein sequence, read N- to C-terminus: Transcriptional repressor NrdR (161 aa).

The segment at 3–34 is a zinc-finger region; it reads CPYCGARDARVIDSRELNGGESIRRRRECIAC. An ATP-cone domain is found at 49 to 139; the sequence is LMVVKRDGRR…VYRRFADLED (91 aa).

This sequence belongs to the NrdR family. Requires Zn(2+) as cofactor.

Functionally, negatively regulates transcription of bacterial ribonucleotide reductase nrd genes and operons by binding to NrdR-boxes. This is Transcriptional repressor NrdR from Thermomicrobium roseum (strain ATCC 27502 / DSM 5159 / P-2).